Here is a 488-residue protein sequence, read N- to C-terminus: Malonate-semialdehyde dehydrogenase (488 aa).

7 residues coordinate NAD(+): alanine 150, phenylalanine 152, lysine 176, glutamate 179, arginine 180, serine 229, and threonine 251. Cysteine 284 (nucleophile) is an active-site residue. Glutamate 382 is a binding site for NAD(+).

It belongs to the aldehyde dehydrogenase family. IolA subfamily. In terms of assembly, homotetramer.

It catalyses the reaction 3-oxopropanoate + NAD(+) + CoA + H2O = hydrogencarbonate + acetyl-CoA + NADH + H(+). The enzyme catalyses 2-methyl-3-oxopropanoate + NAD(+) + CoA + H2O = propanoyl-CoA + hydrogencarbonate + NADH + H(+). The protein operates within polyol metabolism; myo-inositol degradation into acetyl-CoA; acetyl-CoA from myo-inositol: step 7/7. In terms of biological role, catalyzes the oxidation of malonate semialdehyde (MSA) and methylmalonate semialdehyde (MMSA) into acetyl-CoA and propanoyl-CoA, respectively. Is involved in a myo-inositol catabolic pathway. Bicarbonate, and not CO2, is the end-product of the enzymatic reaction. The polypeptide is Malonate-semialdehyde dehydrogenase (Listeria monocytogenes serotype 4b (strain F2365)).